Consider the following 141-residue polypeptide: Hemoglobin subunit alpha-2 (141 aa).

Positions 1 to 141 (VLTDAERKEV…VATVLTSKYR (141 aa)) constitute a Globin domain. An O2-binding site is contributed by His58. His87 contributes to the heme b binding site.

Belongs to the globin family. Heterotetramer of two alpha chains and two beta chains. In terms of tissue distribution, red blood cells.

Its function is as follows. Involved in oxygen transport from the lung to the various peripheral tissues. This Tachyglossus aculeatus aculeatus (Southeast Australian short-beaked echidna) protein is Hemoglobin subunit alpha-2.